The chain runs to 277 residues: Putative glucose-6-phosphate/phosphate-translocator-like protein 1 (277 aa).

5 helical membrane passes run 8 to 28 (VLPS…WWAL), 46 to 66 (LWLT…VSWV), 124 to 143 (MIGF…RNIF), 153 to 173 (VSVM…VTPF), and 230 to 250 (PLKH…FIYS).

Belongs to the TPT transporter family. GPT (TC 2.A.7.9) subfamily.

The protein localises to the membrane. The protein is Putative glucose-6-phosphate/phosphate-translocator-like protein 1 of Arabidopsis thaliana (Mouse-ear cress).